We begin with the raw amino-acid sequence, 242 residues long: UPF0246 protein SPCG_1533 (242 aa).

The protein belongs to the UPF0246 family.

This Streptococcus pneumoniae (strain CGSP14) protein is UPF0246 protein SPCG_1533.